We begin with the raw amino-acid sequence, 138 residues long: Large ribosomal subunit protein uL16 (138 aa).

Positions 1–13 are enriched in basic residues; that stretch reads MLQPKRRKYRKEQ. A disordered region spans residues 1 to 24; it reads MLQPKRRKYRKEQKGRNTGKATRG.

Belongs to the universal ribosomal protein uL16 family. As to quaternary structure, part of the 50S ribosomal subunit.

Its function is as follows. Binds 23S rRNA and is also seen to make contacts with the A and possibly P site tRNAs. This is Large ribosomal subunit protein uL16 from Burkholderia lata (strain ATCC 17760 / DSM 23089 / LMG 22485 / NCIMB 9086 / R18194 / 383).